Here is a 416-residue protein sequence, read N- to C-terminus: Serine hydroxymethyltransferase (416 aa).

Residues Leu-119 and Gly-123–Leu-125 contribute to the (6S)-5,6,7,8-tetrahydrofolate site. Position 228 is an N6-(pyridoxal phosphate)lysine (Lys-228). Glu-243 serves as a coordination point for (6S)-5,6,7,8-tetrahydrofolate.

Belongs to the SHMT family. In terms of assembly, homodimer. It depends on pyridoxal 5'-phosphate as a cofactor.

The protein localises to the cytoplasm. It catalyses the reaction (6R)-5,10-methylene-5,6,7,8-tetrahydrofolate + glycine + H2O = (6S)-5,6,7,8-tetrahydrofolate + L-serine. It participates in one-carbon metabolism; tetrahydrofolate interconversion. The protein operates within amino-acid biosynthesis; glycine biosynthesis; glycine from L-serine: step 1/1. Functionally, catalyzes the reversible interconversion of serine and glycine with tetrahydrofolate (THF) serving as the one-carbon carrier. This reaction serves as the major source of one-carbon groups required for the biosynthesis of purines, thymidylate, methionine, and other important biomolecules. Also exhibits THF-independent aldolase activity toward beta-hydroxyamino acids, producing glycine and aldehydes, via a retro-aldol mechanism. The protein is Serine hydroxymethyltransferase of Desulforapulum autotrophicum (strain ATCC 43914 / DSM 3382 / VKM B-1955 / HRM2) (Desulfobacterium autotrophicum).